The chain runs to 361 residues: G2/mitotic-specific cyclin-B (361 aa).

This sequence belongs to the cyclin family. Cyclin AB subfamily.

Functionally, essential for the control of the cell cycle at the G2/M (mitosis) transition. Interacts with the CDC2 protein kinase to form MPF. G2/M cyclins accumulate steadily during G2 and are abruptly destroyed at mitosis. The chain is G2/mitotic-specific cyclin-B from Hydra vulgaris (Hydra).